We begin with the raw amino-acid sequence, 536 residues long: Cytochrome P450 monooxygenase macC (536 aa).

Residues 2-22 traverse the membrane as a helical segment; it reads ALLYITTAALALLLLFLRAVF. Cys-448 provides a ligand contact to heme.

The protein belongs to the cytochrome P450 family. The cofactor is heme.

The protein resides in the membrane. The protein operates within secondary metabolite biosynthesis; terpenoid biosynthesis. Cytochrome P450 monooxygenase; part of the gene cluster that mediates the biosynthesis of macrophorins, isoprenoid epoxycyclohexenones containing cyclized drimane moieties. The first step of the pathway is the synthesis of 6-methylsalicylic acid (6-MSA) by the polyketide synthase macA. 6-MSA is then converted to m-cresol by the decarboxylase macB. The cytochrome P450 monooxygenase macC then catalyzes the oxidation of m-cresol to toluquinol. Epoxidation of toluquinol is then performed by the short chain dehydrogenase macD, with the help of macE, and a further prenylation by macG leads to 7-deacetoxyyanuthone A. The next step is the hydroxylation of C-22 of 7-deacetoxyyanuthone A by the cytochrome P450 monooxygenase macH to yield 22-deacetylyanuthone A. O-Mevalon transferase macI then attaches mevalon to the hydroxyl group of 22-deacetylyanuthone A to produce yanuthone E. The terpene cyclase macJ catalyzes the cyclization of 22-deacetylyanuthone A to macrophorin A. MacJ is also able to catalyze cyclization of yanuthone E and 7-deacetoxyyanuthone A to their corresponding macrophorins. The macJ products can be further modified by macH and macJ, as well as by the FAD-dependent monooxygenase macF, to produce additional macrophorins, including 4'-oxomacrophorin A, 4'-oxomacrophorin D and 4'-oxomacrophorin E. The chain is Cytochrome P450 monooxygenase macC from Penicillium terrestre.